Consider the following 663-residue polypeptide: Zinc finger protein 44 (663 aa).

The region spanning 52-138 (VAFEDVAVNF…GETLSQIRNS (87 aa)) is the KRAB domain. The C2H2-type 1; atypical zinc finger occupies 189-211 (YTHKQCGKGLSYRHSFQTCERPH). A C2H2-type 2; degenerate zinc finger spans residues 217–239 (YDCKECGKTFSSPGNLRRHMVVK). 15 consecutive C2H2-type zinc fingers follow at residues 245–267 (YKCE…ERTH), 273–295 (YECK…EKIH), 301–323 (YECK…ERTH), 329–351 (YKCK…ERIH), 357–379 (YTCK…MIMH), 385–407 (HKCK…EGTH), 413–435 (YECK…MMAH), 441–463 (HKCT…ERTH), 469–491 (YECK…ETTH), 497–518 (YKCK…ETTH), 524–546 (YECK…ERTH), 552–574 (YECQ…ERTH), 580–602 (YECK…ERTH), 608–630 (YECK…ERTH), and 636–658 (YECK…KRTH).

The protein belongs to the krueppel C2H2-type zinc-finger protein family.

It localises to the nucleus. Functionally, may be involved in transcriptional regulation. The chain is Zinc finger protein 44 (ZNF44) from Homo sapiens (Human).